The sequence spans 104 residues: L-rhamnose mutarotase (104 aa).

Tyrosine 18 contributes to the substrate binding site. Catalysis depends on histidine 22, which acts as the Proton donor. Residues tyrosine 41 and 76 to 77 (WW) each bind substrate.

It belongs to the rhamnose mutarotase family. Homodimer.

The protein resides in the cytoplasm. It carries out the reaction alpha-L-rhamnose = beta-L-rhamnose. The protein operates within carbohydrate metabolism; L-rhamnose metabolism. In terms of biological role, involved in the anomeric conversion of L-rhamnose. The protein is L-rhamnose mutarotase of Rhizobium meliloti (strain 1021) (Ensifer meliloti).